The sequence spans 464 residues: ATP-dependent protease ATPase subunit HslU (464 aa).

ATP contacts are provided by residues Ile-19, 61–66 (GVGKTE), Asp-277, Glu-342, and Arg-414.

Belongs to the ClpX chaperone family. HslU subfamily. A double ring-shaped homohexamer of HslV is capped on each side by a ring-shaped HslU homohexamer. The assembly of the HslU/HslV complex is dependent on binding of ATP.

The protein localises to the cytoplasm. ATPase subunit of a proteasome-like degradation complex; this subunit has chaperone activity. The binding of ATP and its subsequent hydrolysis by HslU are essential for unfolding of protein substrates subsequently hydrolyzed by HslV. HslU recognizes the N-terminal part of its protein substrates and unfolds these before they are guided to HslV for hydrolysis. The sequence is that of ATP-dependent protease ATPase subunit HslU from Lactobacillus gasseri (strain ATCC 33323 / DSM 20243 / BCRC 14619 / CIP 102991 / JCM 1131 / KCTC 3163 / NCIMB 11718 / NCTC 13722 / AM63).